The following is a 338-amino-acid chain: MNLPERSRFVIYAVGIFVCYFLYGIVQEKLTRGRYGEEVQTDGSVGERFTYALALVWVQCLCNYVFAKVLLTIRPQKEDTTNAGSYVACSLTYLLAMVSTNMAMRWVPYPTAVVGKSAKPIPVMILGVLIGRKSYSWTRYACVLTIVLGVILFMYKEGKVSNLPAETTLLGEVLLFLSLSMDGLTGAVQERIRAASAPSGQQMMRAMNFWSTLMLGVAMVFTGEAKEFMYFTIRHPEAWTHLSLIAVCGVLGQFFIFLMVASFGPLACSVVTTTRKFFTVLCSVLLFGNVLIARQWLGAVLVFAALFVDMLYGKKAPLATAKKPPVEGKLSEEKKLNS.

The next 9 membrane-spanning stretches (helical) occupy residues 9–29 (FVIYAVGIFVCYFLYGIVQEK), 53–73 (LALVWVQCLCNYVFAKVLLTI), 84–104 (GSYVACSLTYLLAMVSTNMAM), 111–131 (TAVVGKSAKPIPVMILGVLIG), 135–155 (YSWTRYACVLTIVLGVILFMY), 168–188 (TLLGEVLLFLSLSMDGLTGAV), 213–233 (LMLGVAMVFTGEAKEFMYFTI), 244–264 (LIAVCGVLGQFFIFLMVASFG), and 284–304 (VLLFGNVLIARQWLGAVLVFA). The Di-lysine motif signature appears at 334–338 (KKLNS).

The protein belongs to the nucleotide-sugar transporter family. SLC35B subfamily.

Its subcellular location is the endoplasmic reticulum membrane. Probable sugar transporter. This Drosophila melanogaster (Fruit fly) protein is Solute carrier family 35 member B1 homolog (meigo).